The sequence spans 371 residues: Leucine-rich repeat-containing protein 58 (371 aa).

Phosphoserine is present on S24. LRR repeat units follow at residues 45–66 (ALLRLLLPHNRLVSLPRALGSG), 69–91 (HLQLLDVSGNALTALGPELLALR), 92–113 (GLRTLLAKNNRLGGPSALPKGL), 121–143 (SLQVLNLSGNCFQEVPASLLELR), 144–166 (ALQTLSLGGNQLQSIPAEIENLQ), 167–189 (SLECLYLGGNFIKEIPPELGNLP), 190–211 (SLNYLVLCDNKIQSIPPQLSQL), 213–234 (SLRSLSLHNNLLTYLPREILNL), and 236–256 (HLEELSLRGNPLVVRFVRDLT). Positions 340 to 351 (SSASHSSTSQSE) are enriched in low complexity. The disordered stretch occupies residues 340–361 (SSASHSSTSQSESDSEDEASVA).

The protein is Leucine-rich repeat-containing protein 58 (LRRC58) of Homo sapiens (Human).